Reading from the N-terminus, the 1450-residue chain is M-protein, striated muscle (1450 aa).

A disordered region spans residues alanine 66–glutamate 87. 2 consecutive Ig-like C2-type domains span residues proline 142–valine 233 and proline 254–phenylalanine 359. Fibronectin type-III domains are found at residues alanine 373 to proline 468, proline 501 to isoleucine 596, alanine 602 to alanine 695, cysteine 698 to glutamate 800, and proline 803 to glycine 900. Ig-like C2-type domains follow at residues proline 899–leucine 995, proline 1002–lysine 1115, proline 1118–serine 1204, proline 1225–lysine 1322, and lysine 1333–serine 1422.

Expressed in pectoralis and cardiac muscle.

Its function is as follows. Is a structural constituent of myofibrillar M-band in striated muscle. The sequence is that of M-protein, striated muscle from Gallus gallus (Chicken).